A 953-amino-acid polypeptide reads, in one-letter code: Xylosyltransferase 1 (953 aa).

The Cytoplasmic segment spans residues 1 to 17 (MVAAPCARRLARRSHSA). A helical; Signal-anchor for type II membrane protein membrane pass occupies residues 18–38 (LLAALMVLLLHTLVVWNFSSL). Residues 39-953 (DSGAGEQRRA…GAVKPDGRLR (915 aa)) are Lumenal-facing. The segment covering 48 to 62 (AGAAAGAAEQQQPAA) has biased composition (low complexity). 2 disordered regions span residues 48–67 (AGAA…RRER) and 74–251 (LPAA…APKC). Residues 79 to 97 (GGPGGRAGGGGARGGGPGG) show a composition bias toward gly residues. The segment covering 138–154 (KVRTDSNNENSVPKDFE) has biased composition (basic and acidic residues). Over residues 156–165 (VDNSNFAPRT) the composition is skewed to polar residues. 2 stretches are compositionally biased toward basic and acidic residues: residues 170-197 (HQPE…DKRQ) and 205-216 (GPKEVLPPREKA). Asn-219 is a glycosylation site (N-linked (GlcNAc...) asparagine). 4 disulfide bridges follow: Cys-251/Cys-279, Cys-295/Cys-536, Cys-555/Cys-568, and Cys-557/Cys-566. UDP-alpha-D-xylose-binding positions include Val-327, Asp-355, and 384 to 386 (TIW). N-linked (GlcNAc...) asparagine glycosylation is present at Asn-415. 488 to 489 (DW) is a UDP-alpha-D-xylose binding site. Residues Ser-569 and 592–593 (RK) each bind UDP-alpha-D-xylose. 2 disulfide bridges follow: Cys-669-Cys-921 and Cys-914-Cys-927. Asn-771 is a glycosylation site (N-linked (GlcNAc...) asparagine). The interval 933-953 (SSFSPDPKSELGAVKPDGRLR) is disordered.

This sequence belongs to the glycosyltransferase 14 family. XylT subfamily. In terms of assembly, monomer. A divalent metal cation is required as a cofactor. Contains 7 disulfide bonds. Post-translationally, N-glycosylated. As to expression, detected in brain, spleen, kidney and testis, and at low levels in skeletal muscle.

Its subcellular location is the golgi apparatus membrane. The catalysed reaction is UDP-alpha-D-xylose + L-seryl-[protein] = 3-O-(beta-D-xylosyl)-L-seryl-[protein] + UDP + H(+). It functions in the pathway glycan metabolism; chondroitin sulfate biosynthesis. Its pathway is glycan metabolism; heparan sulfate biosynthesis. Functionally, catalyzes the first step in the biosynthesis of chondroitin sulfate and dermatan sulfate proteoglycans, such as DCN. Transfers D-xylose from UDP-D-xylose to specific serine residues of the core protein. Required for normal maturation of chondrocytes during bone development, normal onset of ossification and normal embryonic and postnatal skeleton development, especially of the long bones. The sequence is that of Xylosyltransferase 1 (Xylt1) from Mus musculus (Mouse).